The following is a 182-amino-acid chain: COP9 signalosome complex subunit 8 (182 aa).

Positions M1 to D167 constitute a PCI domain.

This sequence belongs to the CSN8 family. In terms of assembly, essential component of the CSN complex, probably composed of CSN1b, alien/CSN2, CSN3, CSN4, CSN5, CSN6, CSN7 and CSN8.

The protein localises to the cytoplasm. The protein resides in the nucleus. Its function is as follows. Probable component of the COP9 signalosome complex (CSN), a complex involved in various cellular and developmental processes. The CSN complex is an essential regulator of the ubiquitin (Ubl) conjugation pathway by mediating the deneddylation of the cullin subunits of the SCF-type E3 ligase complexes, leading to decrease the Ubl ligase activity of SCF. The CSN complex plays an essential role in oogenesis and embryogenesis and is required for proper photoreceptor R cell differentiation and promote lamina glial cell migration or axon targeting. It also promotes Ubl-dependent degradation of cyclin E (CycE) during early oogenesis. The polypeptide is COP9 signalosome complex subunit 8 (CSN8) (Drosophila melanogaster (Fruit fly)).